Consider the following 434-residue polypeptide: Tryptophan dimethylallyltransferase nptA (434 aa).

L-tryptophan contacts are provided by residues 91-92 (SL) and Glu100. Substrate-binding residues include Arg115, Lys202, and Tyr204. Residue Tyr206 coordinates L-tryptophan. The substrate site is built by Arg271, Lys273, Tyr275, Tyr358, Tyr423, and Tyr427.

The protein belongs to the tryptophan dimethylallyltransferase family. In terms of assembly, homodimer.

The enzyme catalyses L-tryptophan + dimethylallyl diphosphate = 4-(3-methylbut-2-enyl)-L-tryptophan + diphosphate. It participates in secondary metabolite biosynthesis. Functionally, nonribosomal peptide synthase involved in the synthesis of nidulanin A and derived compounds. Nidulanin A is a tetracyclopeptide with the sequence L-Phe-L-Kyn-L-Val-D-Val and an isoprene unit N-linked to the amino group of L-kynurenine. The NRPS nlsA is responsible of the synthesis of the cyclopeptide and the prenyltransferase nptA adds the isoprene unit on the L-kynurenine residue of nidulanin A. Further modifications lead to additional oxygenated related compounds. The sequence is that of Tryptophan dimethylallyltransferase nptA from Emericella nidulans (strain FGSC A4 / ATCC 38163 / CBS 112.46 / NRRL 194 / M139) (Aspergillus nidulans).